A 237-amino-acid chain; its full sequence is Phosphoribosylaminoimidazole-succinocarboxamide synthase (237 aa).

This sequence belongs to the SAICAR synthetase family.

It catalyses the reaction 5-amino-1-(5-phospho-D-ribosyl)imidazole-4-carboxylate + L-aspartate + ATP = (2S)-2-[5-amino-1-(5-phospho-beta-D-ribosyl)imidazole-4-carboxamido]succinate + ADP + phosphate + 2 H(+). The protein operates within purine metabolism; IMP biosynthesis via de novo pathway; 5-amino-1-(5-phospho-D-ribosyl)imidazole-4-carboxamide from 5-amino-1-(5-phospho-D-ribosyl)imidazole-4-carboxylate: step 1/2. The protein is Phosphoribosylaminoimidazole-succinocarboxamide synthase of Shigella dysenteriae serotype 1 (strain Sd197).